A 452-amino-acid chain; its full sequence is Phosphoglucosamine mutase (452 aa).

Residue Ser-101 is the Phosphoserine intermediate of the active site. Ser-101, Asp-241, Asp-243, and Asp-245 together coordinate Mg(2+). Ser-101 carries the phosphoserine modification.

This sequence belongs to the phosphohexose mutase family. It depends on Mg(2+) as a cofactor. In terms of processing, activated by phosphorylation.

It catalyses the reaction alpha-D-glucosamine 1-phosphate = D-glucosamine 6-phosphate. Its function is as follows. Catalyzes the conversion of glucosamine-6-phosphate to glucosamine-1-phosphate. This chain is Phosphoglucosamine mutase, found in Lactococcus lactis subsp. lactis (strain IL1403) (Streptococcus lactis).